Here is a 325-residue protein sequence, read N- to C-terminus: Glycerol-3-phosphate dehydrogenase [NAD(P)+] (325 aa).

NADPH is bound by residues W15, R35, and K107. K107, G135, and S137 together coordinate sn-glycerol 3-phosphate. A139 contacts NADPH. Sn-glycerol 3-phosphate is bound by residues K190, D243, S253, R254, and N255. The Proton acceptor role is filled by K190. R254 is a binding site for NADPH. L272 and E274 together coordinate NADPH.

This sequence belongs to the NAD-dependent glycerol-3-phosphate dehydrogenase family.

Its subcellular location is the cytoplasm. The enzyme catalyses sn-glycerol 3-phosphate + NAD(+) = dihydroxyacetone phosphate + NADH + H(+). It carries out the reaction sn-glycerol 3-phosphate + NADP(+) = dihydroxyacetone phosphate + NADPH + H(+). Its pathway is membrane lipid metabolism; glycerophospholipid metabolism. In terms of biological role, catalyzes the reduction of the glycolytic intermediate dihydroxyacetone phosphate (DHAP) to sn-glycerol 3-phosphate (G3P), the key precursor for phospholipid synthesis. The sequence is that of Glycerol-3-phosphate dehydrogenase [NAD(P)+] from Afipia carboxidovorans (strain ATCC 49405 / DSM 1227 / KCTC 32145 / OM5) (Oligotropha carboxidovorans).